Consider the following 136-residue polypeptide: Pterin-4-alpha-carbinolamine dehydratase 2 (136 aa).

An N6-acetyllysine; alternate mark is found at lysine 120, lysine 124, and lysine 131. Lysine 120, lysine 124, and lysine 131 each carry N6-succinyllysine; alternate.

This sequence belongs to the pterin-4-alpha-carbinolamine dehydratase family. In terms of assembly, homotetramer. Interacts with DYRK1B.

The catalysed reaction is (4aS,6R)-4a-hydroxy-L-erythro-5,6,7,8-tetrahydrobiopterin = (6R)-L-erythro-6,7-dihydrobiopterin + H2O. Involved in tetrahydrobiopterin biosynthesis. Seems to both prevent the formation of 7-pterins and accelerate the formation of quinonoid-BH2. Functionally, regulates the dimerization of homeodomain protein HNF-1-alpha and enhances its transcriptional activity. The chain is Pterin-4-alpha-carbinolamine dehydratase 2 (Pcbd2) from Mus musculus (Mouse).